We begin with the raw amino-acid sequence, 180 residues long: Large ribosomal subunit protein uL5 (180 aa).

Belongs to the universal ribosomal protein uL5 family. As to quaternary structure, part of the 50S ribosomal subunit; part of the 5S rRNA/L5/L18/L25 subcomplex. Contacts the 5S rRNA and the P site tRNA. Forms a bridge to the 30S subunit in the 70S ribosome.

Its function is as follows. This is one of the proteins that bind and probably mediate the attachment of the 5S RNA into the large ribosomal subunit, where it forms part of the central protuberance. In the 70S ribosome it contacts protein S13 of the 30S subunit (bridge B1b), connecting the 2 subunits; this bridge is implicated in subunit movement. Contacts the P site tRNA; the 5S rRNA and some of its associated proteins might help stabilize positioning of ribosome-bound tRNAs. The sequence is that of Large ribosomal subunit protein uL5 from Streptococcus suis (strain 05ZYH33).